A 371-amino-acid chain; its full sequence is Protein-tyrosine sulfotransferase 2 (371 aa).

The Cytoplasmic portion of the chain corresponds to 1-8 (MRVTMRRV). A helical; Signal-anchor for type II membrane protein transmembrane segment spans residues 9–25 (LLAVGSVVALMVTLHLG). The Lumenal segment spans residues 26-371 (QQVLECQHVL…QVTQNTSSSH (346 aa)). 76-80 (RSGTT) provides a ligand contact to 3'-phosphoadenylyl sulfate. C94 and C154 are disulfide-bonded. Residue E97 is the Proton donor/acceptor of the active site. An interaction with peptide substrate region spans residues 99-103 (RIIPR). R181, S189, and R193 together coordinate 3'-phosphoadenylyl sulfate. C223 and C231 are oxidised to a cystine. 3'-phosphoadenylyl sulfate-binding positions include Y236, 283–292 (STDQVIKPVN), and K298. Residues N341 and N366 are each glycosylated (N-linked (GlcNAc...) asparagine).

Belongs to the protein sulfotransferase family.

Its subcellular location is the golgi apparatus membrane. It carries out the reaction L-tyrosyl-[protein] + 3'-phosphoadenylyl sulfate = O-sulfo-L-tyrosine-[protein] + adenosine 3',5'-bisphosphate + H(+). Functionally, catalyzes the O-sulfation of tyrosine residues within acidic motifs of polypeptides, using 3'-phosphoadenylyl sulfate (PAPS) as cosubstrate. The chain is Protein-tyrosine sulfotransferase 2 (TPST2) from Gallus gallus (Chicken).